A 661-amino-acid chain; its full sequence is Acetyl-coenzyme A synthetase (661 aa).

Residues 197–200 (RGGK) and Thr-320 contribute to the CoA site. Residues 396-398 (GEP), 420-425 (DTWWQT), Asp-511, and Arg-526 each bind ATP. A CoA-binding site is contributed by Ser-534. Arg-537 contributes to the ATP binding site. Val-548 and Val-553 together coordinate Mg(2+). Residue Lys-620 is modified to N6-acetyllysine.

Belongs to the ATP-dependent AMP-binding enzyme family. Mg(2+) is required as a cofactor. Post-translationally, acetylated. Deacetylation by the SIR2-homolog deacetylase activates the enzyme.

It carries out the reaction acetate + ATP + CoA = acetyl-CoA + AMP + diphosphate. Catalyzes the conversion of acetate into acetyl-CoA (AcCoA), an essential intermediate at the junction of anabolic and catabolic pathways. AcsA undergoes a two-step reaction. In the first half reaction, AcsA combines acetate with ATP to form acetyl-adenylate (AcAMP) intermediate. In the second half reaction, it can then transfer the acetyl group from AcAMP to the sulfhydryl group of CoA, forming the product AcCoA. This is Acetyl-coenzyme A synthetase from Leptospira interrogans serogroup Icterohaemorrhagiae serovar Lai (strain 56601).